Consider the following 463-residue polypeptide: Cysteine--tRNA ligase (463 aa).

Cys28 lines the Zn(2+) pocket. Positions 30–40 match the 'HIGH' region motif; sequence ITPYDLCHIGH. Positions 211, 236, and 240 each coordinate Zn(2+). The 'KMSKS' region motif lies at 268-272; it reads KMSKS. Lys271 provides a ligand contact to ATP.

It belongs to the class-I aminoacyl-tRNA synthetase family. As to quaternary structure, monomer. Requires Zn(2+) as cofactor.

The protein localises to the cytoplasm. It catalyses the reaction tRNA(Cys) + L-cysteine + ATP = L-cysteinyl-tRNA(Cys) + AMP + diphosphate. This is Cysteine--tRNA ligase from Wigglesworthia glossinidia brevipalpis.